The sequence spans 441 residues: Cysteine--tRNA ligase (441 aa).

C24 lines the Zn(2+) pocket. A 'HIGH' region motif is present at residues P26–N36. The Zn(2+) site is built by C204, H230, and E234. The 'KMSKS' region signature appears at K262–S266. K265 is a binding site for ATP.

This sequence belongs to the class-I aminoacyl-tRNA synthetase family. Monomer. Zn(2+) serves as cofactor.

The protein resides in the cytoplasm. It carries out the reaction tRNA(Cys) + L-cysteine + ATP = L-cysteinyl-tRNA(Cys) + AMP + diphosphate. The protein is Cysteine--tRNA ligase of Mycoplasma capricolum subsp. capricolum (strain California kid / ATCC 27343 / NCTC 10154).